The following is a 281-amino-acid chain: 2-dehydro-3-deoxyphosphooctonate aldolase (281 aa).

Belongs to the KdsA family.

Its subcellular location is the cytoplasm. It carries out the reaction D-arabinose 5-phosphate + phosphoenolpyruvate + H2O = 3-deoxy-alpha-D-manno-2-octulosonate-8-phosphate + phosphate. Its pathway is carbohydrate biosynthesis; 3-deoxy-D-manno-octulosonate biosynthesis; 3-deoxy-D-manno-octulosonate from D-ribulose 5-phosphate: step 2/3. The protein operates within bacterial outer membrane biogenesis; lipopolysaccharide biosynthesis. The polypeptide is 2-dehydro-3-deoxyphosphooctonate aldolase (Stutzerimonas stutzeri (strain A1501) (Pseudomonas stutzeri)).